The chain runs to 148 residues: uncharacterized protein (148 aa).

This is an uncharacterized protein from Methanothermobacter thermautotrophicus (Methanobacterium thermoformicicum).